A 625-amino-acid polypeptide reads, in one-letter code: Chaperone protein HtpG (625 aa).

The segment at 1-337 is a; substrate-binding; it reads MSTNQETRGF…TNDLPLNVSR (337 aa). Residues 338–554 form a b region; the sequence is EILQENKITA…NDEMTTQMAK (217 aa). A c region spans residues 555-625; it reads LFAAMGQKAP…FIKRMNKLLG (71 aa).

It belongs to the heat shock protein 90 family. In terms of assembly, homodimer.

The protein resides in the cytoplasm. In terms of biological role, molecular chaperone. Has ATPase activity. This is Chaperone protein HtpG from Actinobacillus pleuropneumoniae serotype 3 (strain JL03).